The chain runs to 224 residues: Large ribosomal subunit protein bL25 (224 aa).

The tract at residues 190–224 (EPAPAAEGAAPAEGAAAAAAGGKPAAKTAKPAAKK) is disordered.

It belongs to the bacterial ribosomal protein bL25 family. CTC subfamily. Part of the 50S ribosomal subunit; part of the 5S rRNA/L5/L18/L25 subcomplex. Contacts the 5S rRNA. Binds to the 5S rRNA independently of L5 and L18.

In terms of biological role, this is one of the proteins that binds to the 5S RNA in the ribosome where it forms part of the central protuberance. The polypeptide is Large ribosomal subunit protein bL25 (Variovorax paradoxus (strain S110)).